A 311-amino-acid polypeptide reads, in one-letter code: Salutaridine reductase (311 aa).

An NADP(+)-binding site is contributed by V17–V40. S180 is a binding site for substrate. The Proton acceptor role is filled by Y236.

It belongs to the short-chain dehydrogenases/reductases (SDR) family.

It carries out the reaction (7S)-salutaridinol + NADP(+) = salutaridine + NADPH + H(+). Its activity is regulated as follows. Subject to substrate inhibition at salutaridine concentrations higher than 20 to 30 uM. Its function is as follows. Involved in biosynthesis of morphinan-type benzylisoquinoline alkaloids. Catalyzes the stereospecific conversion of salutaridine to salutaridinol. This chain is Salutaridine reductase, found in Papaver bracteatum (Great scarlet poppy).